The following is a 1336-amino-acid chain: Aldehyde oxidase 4 (1336 aa).

The 2Fe-2S ferredoxin-type domain occupies 8–95 (DELIFFVNGK…GAAITTVEGV (88 aa)). Residues C47, C52, C55, and C77 each contribute to the [2Fe-2S] cluster site. Residue Q116 participates in Mo-molybdopterin binding. [2Fe-2S] cluster-binding residues include C117, C120, C152, and C154. Residue C154 participates in Mo-molybdopterin binding. The region spanning 237–423 (FQGKRTTWII…LSIFIPYTAQ (187 aa)) is the FAD-binding PCMH-type domain. Residues 265–272 (LVMGNTTV), A346, T355, H359, D368, and I413 each bind FAD. Mo-molybdopterin contacts are provided by residues 804–805 (AF), L1045, 1086–1089 (GSMG), Q1201, and L1265. E1267 acts as the Proton acceptor; for azaheterocycle hydroxylase activity in catalysis.

Belongs to the xanthine dehydrogenase family. In terms of assembly, homodimer. It depends on [2Fe-2S] cluster as a cofactor. The cofactor is FAD. Mo-molybdopterin serves as cofactor. Highly expressed in Harderian glands and sebaceous glands with detectable levels in the epidermis and other keratinized epithelia (at protein level). Detected in testis. The expression is 3 times greater in females than in males.

Its subcellular location is the cytoplasm. It carries out the reaction an aldehyde + O2 + H2O = a carboxylate + H2O2 + H(+). It catalyses the reaction retinal + O2 + H2O = retinoate + H2O2 + H(+). The enzyme catalyses all-trans-retinal + O2 + H2O = all-trans-retinoate + H2O2 + H(+). In terms of biological role, aldehyde oxidase able to catalyze the oxidation of retinaldehyde into retinoate. Is responsible for the major all-trans-retinaldehyde-metabolizing activity in the Harderian gland, and contributes a significant amount of the same activity in the skin. Is devoid of pyridoxal-oxidizing activity, in contrast to the other aldehyde oxidases. Acts as a negative modulator of the epidermal trophism. May be able to oxidize a wide variety of aldehydes into their corresponding carboxylates and to hydroxylate azaheterocycles. In Mus musculus (Mouse), this protein is Aldehyde oxidase 4 (Aox4).